A 152-amino-acid chain; its full sequence is Arginine repressor (152 aa).

Belongs to the ArgR family.

Its subcellular location is the cytoplasm. It functions in the pathway amino-acid biosynthesis; L-arginine biosynthesis [regulation]. In terms of biological role, regulates arginine biosynthesis genes. This is Arginine repressor from Lachnoclostridium phytofermentans (strain ATCC 700394 / DSM 18823 / ISDg) (Clostridium phytofermentans).